The following is a 315-amino-acid chain: Lipoyl synthase (315 aa).

[4Fe-4S] cluster-binding residues include Cys-63, Cys-68, Cys-74, Cys-89, Cys-93, Cys-96, and Ser-303. A Radical SAM core domain is found at 75-292; the sequence is FSHGTATFMI…EKKAYDMGFR (218 aa).

Belongs to the radical SAM superfamily. Lipoyl synthase family. [4Fe-4S] cluster serves as cofactor.

The protein resides in the cytoplasm. It catalyses the reaction [[Fe-S] cluster scaffold protein carrying a second [4Fe-4S](2+) cluster] + N(6)-octanoyl-L-lysyl-[protein] + 2 oxidized [2Fe-2S]-[ferredoxin] + 2 S-adenosyl-L-methionine + 4 H(+) = [[Fe-S] cluster scaffold protein] + N(6)-[(R)-dihydrolipoyl]-L-lysyl-[protein] + 4 Fe(3+) + 2 hydrogen sulfide + 2 5'-deoxyadenosine + 2 L-methionine + 2 reduced [2Fe-2S]-[ferredoxin]. It functions in the pathway protein modification; protein lipoylation via endogenous pathway; protein N(6)-(lipoyl)lysine from octanoyl-[acyl-carrier-protein]: step 2/2. Catalyzes the radical-mediated insertion of two sulfur atoms into the C-6 and C-8 positions of the octanoyl moiety bound to the lipoyl domains of lipoate-dependent enzymes, thereby converting the octanoylated domains into lipoylated derivatives. This is Lipoyl synthase from Laribacter hongkongensis (strain HLHK9).